The chain runs to 275 residues: Exosome complex component Rrp42 (275 aa).

It belongs to the RNase PH family. Rrp42 subfamily. In terms of assembly, component of the archaeal exosome complex. Forms a hexameric ring-like arrangement composed of 3 Rrp41-Rrp42 heterodimers. The hexameric ring associates with a trimer of Rrp4 and/or Csl4 subunits.

It is found in the cytoplasm. Functionally, non-catalytic component of the exosome, which is a complex involved in RNA degradation. Contributes to the structuring of the Rrp41 active site. The polypeptide is Exosome complex component Rrp42 (Sulfurisphaera tokodaii (strain DSM 16993 / JCM 10545 / NBRC 100140 / 7) (Sulfolobus tokodaii)).